The sequence spans 180 residues: Urease accessory protein UreE (180 aa).

Residues 71-90 (AAPSGAGHGDGEQDGTGAPG) are disordered.

It belongs to the UreE family.

The protein resides in the cytoplasm. Its function is as follows. Involved in urease metallocenter assembly. Binds nickel. Probably functions as a nickel donor during metallocenter assembly. In Kocuria rhizophila (strain ATCC 9341 / DSM 348 / NBRC 103217 / DC2201), this protein is Urease accessory protein UreE.